The primary structure comprises 321 residues: Coproporphyrin III ferrochelatase (321 aa).

Residues His-185 and Glu-267 each coordinate Fe(2+).

This sequence belongs to the ferrochelatase family.

The protein resides in the cytoplasm. The enzyme catalyses Fe-coproporphyrin III + 2 H(+) = coproporphyrin III + Fe(2+). It participates in porphyrin-containing compound metabolism; protoheme biosynthesis. In terms of biological role, involved in coproporphyrin-dependent heme b biosynthesis. Catalyzes the insertion of ferrous iron into coproporphyrin III to form Fe-coproporphyrin III. The protein is Coproporphyrin III ferrochelatase of Lacticaseibacillus casei (strain BL23) (Lactobacillus casei).